The following is a 280-amino-acid chain: MLMQIADFEIGLNNPLFLIAGPCVIESEALVMDVAGELKSITQQLDMPFIFKASFDKANRSSHLSYRGPGIEKGLTILEKVKKTLEVPIITDVHEDTPLQEVAAVVDVLQTPAFLCRQSNFIRSVAACGKPVNIKKGQFLAPWEMKQVVAKAWATGNKKIMVCERGYSFGYNNLISDMRALAILRETACPVIFDATHSVQLPGGHGTNSGGQREFVPVLARAATAAGIAGIFMETHPDPDRALSDGPNSWPLAKMQPLLETLKELDKVVKNAGFLEQSSE.

It belongs to the KdsA family.

The protein localises to the cytoplasm. It catalyses the reaction D-arabinose 5-phosphate + phosphoenolpyruvate + H2O = 3-deoxy-alpha-D-manno-2-octulosonate-8-phosphate + phosphate. It functions in the pathway carbohydrate biosynthesis; 3-deoxy-D-manno-octulosonate biosynthesis; 3-deoxy-D-manno-octulosonate from D-ribulose 5-phosphate: step 2/3. It participates in bacterial outer membrane biogenesis; lipopolysaccharide biosynthesis. The protein is 2-dehydro-3-deoxyphosphooctonate aldolase of Coxiella burnetii (strain CbuG_Q212) (Coxiella burnetii (strain Q212)).